The following is a 123-amino-acid chain: Protein lgg-1 (123 aa).

G116 carries the Phosphatidylethanolamine amidated glycine lipid modification. Residues 117–123 constitute a propeptide, removed in mature form; that stretch reads GEVEKKE.

The protein belongs to the ATG8 family. In terms of assembly, interacts with sepa-1 (via the LIR motifs); the interaction is direct. Interacts with allo-1 (via the LIR motif). Interacts with sqst-1 (via the LIR motifs); the interaction is direct. Both lipidated and unlipidated forms interact with epg-7 (via the LIR motif); the interaction is direct. Interacts with epg-2 (via the LIR motifs); the interaction is direct. Interacts with atg-13; the interaction is direct. Interacts with unc-51 (via the LIR motif); the interaction is direct. Interacts with atg-7; the interaction is direct. Interacts with atg-3. The interaction with atg-7 and atg-3 may be required for the lipidation of lgg-1. Post-translationally, cleaved by atg-4.1 and/or atg-4.2, after Gly-116 to form a thioester bond with 'Cys-523' of atg-7 (E1-like activating enzyme) before being transferred to 'Cys-255' of atg-3 (E2 conjugating enzyme), in order to be amidated with phosphatidylethanolamine. This lipid modification anchors lgg-1 to membranes and can be reversed by atg-4.2, releasing soluble lgg-1. C-terminal cleavage is essential for autophagosome initiation and biogenesis. Lipidation is not essential for autophagy or development but the lipidated form is involved in cargo recognition and autophagosome biogenesis. Lipidation regulates lgg-2-positive autophagosome formation. As to expression, expressed in PLML touch receptor neuron and in the ventral nerve cord. Expressed in AIY interneurons.

The protein localises to the preautophagosomal structure. The protein resides in the cytoplasmic vesicle. It localises to the autophagosome. It is found in the autophagosome membrane. Its subcellular location is the lysosome lumen. The protein localises to the mitochondrion. The protein resides in the cytoplasm. It localises to the phagosome membrane. It is found in the cell membrane. Its subcellular location is the cell projection. The protein localises to the dendrite. The protein resides in the perikaryon. Functionally, ubiquitin-like modifier involved in the formation of autophagosomal vacuoles (autophagosomes). When lipidated mediates tethering between adjacent membranes and stimulates membrane fusion during autophagy. Recruits lipidated-lgg-2 to maturing autophagosomes. Acts in the aggrephagy pathway, which is the macroautophagic degradation of ubiquitinated protein aggregates, and preferentially interacts with autophagy proteins and substrates containing LIR motifs to mediate autophagosome formation and protein aggregate degradation. In particular, binds to components of the unc-51-atg-13 complex to regulate autophagosome formation and cargo sequestration. Required for the degradation of specific sepa-1- and sqst-1-containing protein aggregates during embryogenesis. Involved in allophagy, which is an autophagic process in which paternal mitochondria and organelles are degraded during fertilization, and moreover is required for the formation of lgg-2-positive allophagic autophagosomes in embryos. Involved in the clearance of apoptotic cells by promoting the delivery of engulfed apoptotic cells to the lysosome. Plays a role in the distribution and clearance of germ cell specific P-granules from somatic cells. Also plays a role in the autophagy-mediated degradation of ribosomal RNA and ribosomal proteins in lysosomes. Involved in xenophagy, the autophagy-mediated degradation of pathogens and pathogen products, such as toxins. Required for normal survival when exposed to pathogenic bacteria S.typhimurium probably by promoting autophagic degradation of intracellular S.typhimurium. Also plays a role in membrane-pore repair. Plays a role in mitophagy. Essential for dauer development and longevity, including longevity in response to moderate, short-term heat shock, also known as a hormetic heat shock. The chain is Protein lgg-1 from Caenorhabditis elegans.